Consider the following 1221-residue polypeptide: DNA replication helicase (1221 aa).

Positions 692 to 701 match the Nuclear localization signal motif; the sequence is PKCKCYKKIK. 917-924 provides a ligand contact to ATP; the sequence is GEPGSGKS. A DNA-binding region (H-T-H motif) is located at residues 967–981; the sequence is INELKQCSESYFKKH.

As to quaternary structure, interacts with IE1 and LEF-3.

The protein resides in the host nucleus. It catalyses the reaction ATP + H2O = ADP + phosphate + H(+). In terms of biological role, essential for initiation of viral DNA replication, it may contribute to other functions such as controlling the switch to the late phase and leading to the inhibition of host protein synthesis. Required for late and very late gene expression. This is DNA replication helicase (HELI) from Lepidoptera (butterflies and moths).